Reading from the N-terminus, the 287-residue chain is Pyridoxal kinase PdxY (287 aa).

Residues Ser-10 and 45-46 (TQ) each bind substrate. Residues Asp-112, Ala-144, Glu-149, Lys-182, and 209–212 (RPLV) each bind ATP. Asp-224 contributes to the substrate binding site.

The protein belongs to the pyridoxine kinase family. PdxY subfamily. As to quaternary structure, homodimer. Mg(2+) is required as a cofactor.

The catalysed reaction is pyridoxal + ATP = pyridoxal 5'-phosphate + ADP + H(+). It functions in the pathway cofactor metabolism; pyridoxal 5'-phosphate salvage; pyridoxal 5'-phosphate from pyridoxal: step 1/1. Its function is as follows. Pyridoxal kinase involved in the salvage pathway of pyridoxal 5'-phosphate (PLP). Catalyzes the phosphorylation of pyridoxal to PLP. The chain is Pyridoxal kinase PdxY from Escherichia coli O157:H7.